Here is a 296-residue protein sequence, read N- to C-terminus: Acetaldehyde dehydrogenase (296 aa).

Residue 15-18 (SGNI) participates in NAD(+) binding. Catalysis depends on Cys-132, which acts as the Acyl-thioester intermediate. Residues 164 to 172 (SAGPATRAN) and Asn-274 each bind NAD(+).

Belongs to the acetaldehyde dehydrogenase family. Interacts with MhpE.

It catalyses the reaction acetaldehyde + NAD(+) + CoA = acetyl-CoA + NADH + H(+). The protein operates within aromatic compound metabolism; 3-phenylpropanoate degradation. Its function is as follows. Catalyzes the conversion of acetaldehyde to acetyl-CoA, using NAD(+) and coenzyme A. Is the final enzyme in the meta-cleavage pathway for the degradation of aromatic compounds. In Pectobacterium atrosepticum (strain SCRI 1043 / ATCC BAA-672) (Erwinia carotovora subsp. atroseptica), this protein is Acetaldehyde dehydrogenase.